The chain runs to 528 residues: Tyrosine-protein kinase transforming protein Yes (528 aa).

Residues aspartate 1–asparagine 12 are compositionally biased toward basic and acidic residues. A disordered region spans residues aspartate 1–proline 35. Over residues serine 18–serine 29 the composition is skewed to low complexity. In terms of domain architecture, SH3 spans glycine 81 to serine 142. The SH2 domain occupies tryptophan 148 to cysteine 245. One can recognise a Protein kinase domain in the interval leucine 267–phenylalanine 520. Residues leucine 273–valine 281 and lysine 295 contribute to the ATP site. Aspartate 386 (proton acceptor) is an active-site residue. The residue at position 416 (tyrosine 416) is a Phosphotyrosine; by autocatalysis.

The protein belongs to the protein kinase superfamily. Tyr protein kinase family. SRC subfamily.

It carries out the reaction L-tyrosyl-[protein] + ATP = O-phospho-L-tyrosyl-[protein] + ADP + H(+). This Galliformes (Y73SV) protein is Tyrosine-protein kinase transforming protein Yes (V-YES).